The primary structure comprises 463 residues: Secretogranin-3 (463 aa).

A signal peptide spans 1 to 20 (MGPKYVFITAIIGVFWHVQG). 3 disordered regions span residues 87–111 (VKRSGSVRSSVGGHRGTLDDADSTK), 225–267 (DDDK…PEED), and 353–398 (EDKN…KGKA). 2 stretches are compositionally biased toward basic and acidic residues: residues 102-111 (GTLDDADSTK) and 229-262 (QEGKMETRNKNEDRESSETKNEDSFSSKERRNEL).

In terms of assembly, interacts with CHGA. Interacts with secretogranin II/SCG2. Interacts (via C-terminus) with CPE.

It is found in the cytoplasmic vesicle. It localises to the secretory vesicle. The protein resides in the secretory vesicle membrane. The protein localises to the secreted. Its function is as follows. Member of the granin protein family that regulates the biogenesis of secretory granules. Acts as a sorting receptor for intragranular proteins including chromogranin A/CHGA. May also play a role in angiogenesis. Promotes endothelial proliferation, migration and tube formation through MEK/ERK signaling pathway. The chain is Secretogranin-3 (scg3) from Xenopus tropicalis (Western clawed frog).